The following is a 405-amino-acid chain: uncharacterized protein (405 aa).

The next 12 membrane-spanning stretches (helical) occupy residues 19 to 39 (IVSI…PLAV), 47 to 67 (VMGF…FATL), 85 to 105 (IVVF…TAGL), 107 to 127 (ASLP…LGIG), 156 to 176 (GIVT…FYHW), 178 to 198 (GLQA…LLAI), 224 to 244 (GMAL…ITLF), 252 to 272 (GAAF…LLFP), 283 to 303 (VAMI…VATM), 309 to 329 (IGVL…GVVA), 344 to 364 (TYTV…GLVM), and 366 to 386 (WAGV…ALLL).

It belongs to the major facilitator superfamily. YhhS family.

The protein localises to the cell inner membrane. This is an uncharacterized protein from Shigella flexneri.